A 139-amino-acid chain; its full sequence is Protein FAM237B (139 aa).

A signal peptide spans 1–24 (MCFATRRWFYLHLGCMMLINLVNA). A Methionine amide modification is found at methionine 112. The propeptide at 113-139 (GRRQVMPPKYNFPQKITGGNLNVYLRE) is removed in the mature form.

The active form requires C-terminal amidation and disulfide bond formation.

The protein localises to the secreted. Its function is as follows. May be capable of activating GPR83 via the GNAQ signaling pathway. The chain is Protein FAM237B from Homo sapiens (Human).